The primary structure comprises 464 residues: L-cystine uptake protein TcyP (464 aa).

10 helical membrane-spanning segments follow: residues Thr3–Met23, Val34–Pro54, Tyr73–Phe93, Gly107–Ala127, Pro184–Val204, Ile225–Met245, Phe263–Ala283, Ala347–Leu367, Phe371–Gly391, and Phe395–Ile415.

This sequence belongs to the dicarboxylate/amino acid:cation symporter (DAACS) (TC 2.A.23) family.

It localises to the membrane. Mediates uptake of L-cystine, the oxidized form of L-cysteine. The protein is L-cystine uptake protein TcyP of Bacillus thuringiensis subsp. konkukian (strain 97-27).